The chain runs to 205 residues: MATKVYIVYYSMYGHVEKLAQEIRKGAASVDGVEAILWQVPETLQEDVLSKMSAPPKSDAPIITPNELAEADGFIFGFPTRFGMMAAQFKAFLDATGGLWRTQQLAGKPAGIFYSTGSQGGGQETTALTAITQLVHHGMIFVPIGYTFGAGMFEMENVKGGSPYGAGTFAGDGSRQPTELELGQAFHQGKYIAAISKKLKGPAAA.

Residues 5-192 (VYIVYYSMYG…GQAFHQGKYI (188 aa)) enclose the Flavodoxin-like domain. Residues 11-15 (SMYGH), 112-165 (IFYS…SPYG), and His-136 contribute to the FMN site. Tyr-13 contacts NAD(+).

It belongs to the WrbA family. It depends on FMN as a cofactor.

The protein resides in the cell membrane. It catalyses the reaction a quinone + NADH + H(+) = a quinol + NAD(+). The catalysed reaction is a quinone + NADPH + H(+) = a quinol + NADP(+). Catalyzes the transfer of electrons from NADH and NADPH to reduce quinone to the hydroquinone state. The sequence is that of Probable NAD(P)H dehydrogenase (quinone) FQR1-like 1 from Arabidopsis thaliana (Mouse-ear cress).